A 517-amino-acid polypeptide reads, in one-letter code: Variant surface glycoprotein MVAT5 (517 aa).

Positions 1 to 21 (MIGKAFIILSLLNELPTPTAA) are cleaved as a signal peptide. Intrachain disulfides connect Cys417–Cys430 and Cys426–Cys443. A glycan (N-linked (GlcNAc...) asparagine) is linked at Asn435. Residues 454–470 (QAAQTAGAGEGAAGTTT) are compositionally biased toward low complexity. Residues 454–487 (QAAQTAGAGEGAAGTTTDKCKDKKKDDCKSPDCK) form a disordered region. The segment covering 471–487 (DKCKDKKKDDCKSPDCK) has biased composition (basic and acidic residues). Residue Asp495 is the site of GPI-anchor amidated aspartate attachment. Residues 496 to 517 (SSILLNKQFALMVSAAFVALLF) constitute a propeptide, removed in mature form.

Its subcellular location is the cell membrane. VSG forms a coat on the surface of the parasite. The trypanosome evades the immune response of the host by expressing a series of antigenically distinct VSGs from an estimated 1000 VSG genes. This chain is Variant surface glycoprotein MVAT5, found in Trypanosoma brucei rhodesiense.